The sequence spans 350 residues: Secreted effector protein PipB2 (350 aa).

Pentapeptide repeat domains lie at 162–201 (ANLT…NLSG), 202–241 (ASLG…SLLG), 247–286 (CNCS…IMEG), and 287–326 (AVLT…TLTD).

Interacts with the host kinesin light chain (KLC), a subunit of the kinesin-1 motor complex.

It is found in the secreted. The protein localises to the host membrane. Effector proteins function to alter host cell physiology and promote bacterial survival in host tissues. Involved in the reorganization of late endosome/lysosome (LE/Lys) compartments in mammalian cells. Necessary and sufficient to link kinesin-1 onto the Salmonella-containing vacuole (SCV) membrane. Required for centrifugal extension of lysosomal glycoprotein-rich membrane tubules, known as Salmonella-induced filaments (Sifs), away from the SCV and toward the cell periphery. Required for virulence, but not for intracellular survival and replication in phagocytic cells. The chain is Secreted effector protein PipB2 (pipB2) from Salmonella typhi.